The sequence spans 286 residues: MQLLDGKATAATIREELRAEIAALTPRARRAPGLAVILVGEDPASQVYVRNKERACHDTGIVSEAFRLAPTTTQEELERLIADLNVRPDIDGILLQLPLPRGLDAQRCLEAIDPAKDVDGFHPQNMGRLALGLPGFRPCTPAGVMTLLERYDLSPSGRKAVVVGRSNIVGKPLALMLGAPGKYANATVTVCHSGTPDLAAECRTADFLFLAIGRPRFVTADMVREGAVVVDVGINRTETGLAGDCDFEGVSRVASAITPVPGGVGPMTIAQLLVNTVQSWKVRCGL.

NADP(+) is bound by residues 164–166 (GRS), serine 193, and isoleucine 234.

This sequence belongs to the tetrahydrofolate dehydrogenase/cyclohydrolase family. As to quaternary structure, homodimer.

It catalyses the reaction (6R)-5,10-methylene-5,6,7,8-tetrahydrofolate + NADP(+) = (6R)-5,10-methenyltetrahydrofolate + NADPH. It carries out the reaction (6R)-5,10-methenyltetrahydrofolate + H2O = (6R)-10-formyltetrahydrofolate + H(+). It functions in the pathway one-carbon metabolism; tetrahydrofolate interconversion. Catalyzes the oxidation of 5,10-methylenetetrahydrofolate to 5,10-methenyltetrahydrofolate and then the hydrolysis of 5,10-methenyltetrahydrofolate to 10-formyltetrahydrofolate. This chain is Bifunctional protein FolD, found in Nitratidesulfovibrio vulgaris (strain ATCC 29579 / DSM 644 / CCUG 34227 / NCIMB 8303 / VKM B-1760 / Hildenborough) (Desulfovibrio vulgaris).